A 577-amino-acid chain; its full sequence is ABC transporter G family member 4 (577 aa).

One can recognise an ABC transporter domain in the interval L6–S248. Residue G48 to S55 participates in ATP binding. The 211-residue stretch at T299–Y509 folds into the ABC transmembrane type-2 domain. Helical transmembrane passes span L318 to L338, L353 to I373, V400 to V420, L429 to F449, I458 to F478, Y487 to N507, and F548 to L568.

The protein belongs to the ABC transporter superfamily. ABCG family. Eye pigment precursor importer (TC 3.A.1.204) subfamily.

The protein resides in the membrane. The sequence is that of ABC transporter G family member 4 (ABCG4) from Arabidopsis thaliana (Mouse-ear cress).